Consider the following 380-residue polypeptide: Cytochrome b (380 aa).

4 consecutive transmembrane segments (helical) span residues 34-54 (FGSLLGICLMTQILTGLLLAM), 78-99 (WLIRNLHANGASFFFICIYFHI), 114-134 (WNTGVILLLTLMATAFVGYVL), and 179-199 (FFALHFLLPFMIAGLTLIHLT). Positions 84 and 98 each coordinate heme b. Heme b contacts are provided by His183 and His197. His202 is a binding site for a ubiquinone. 4 consecutive transmembrane segments (helical) span residues 227-247 (LKDILGFTLMFLPLTTLALFS), 289-309 (LGGVLALAASVLILFLIPFLH), 321-341 (ISQLLFWILVANLLILTWVGS), and 348-368 (FIIIGQLASVTYFTILLVLFP).

Belongs to the cytochrome b family. As to quaternary structure, the cytochrome bc1 complex contains 11 subunits: 3 respiratory subunits (MT-CYB, CYC1 and UQCRFS1), 2 core proteins (UQCRC1 and UQCRC2) and 6 low-molecular weight proteins (UQCRH/QCR6, UQCRB/QCR7, UQCRQ/QCR8, UQCR10/QCR9, UQCR11/QCR10 and a cleavage product of UQCRFS1). This cytochrome bc1 complex then forms a dimer. The cofactor is heme b.

Its subcellular location is the mitochondrion inner membrane. Component of the ubiquinol-cytochrome c reductase complex (complex III or cytochrome b-c1 complex) that is part of the mitochondrial respiratory chain. The b-c1 complex mediates electron transfer from ubiquinol to cytochrome c. Contributes to the generation of a proton gradient across the mitochondrial membrane that is then used for ATP synthesis. This is Cytochrome b (MT-CYB) from Pachyptila salvini (Salvin's prion).